Here is a 260-residue protein sequence, read N- to C-terminus: Kallikrein-8 (260 aa).

Residues 1-28 (MGRPRPRAAKTWMFLLLLGGAWAGHSRA) form the signal peptide. The propeptide occupies 29–32 (QEDK). The 225-residue stretch at 33–257 (VLGGHECQPH…YLDWIKKIIG (225 aa)) folds into the Peptidase S1 domain. 6 disulfides stabilise this stretch: Cys-39–Cys-173, Cys-58–Cys-74, Cys-145–Cys-246, Cys-152–Cys-218, Cys-184–Cys-198, and Cys-208–Cys-233. The Charge relay system role is filled by His-73. An N-linked (GlcNAc...) asparagine glycan is attached at Asn-110. The Charge relay system role is filled by Asp-120. The active-site Charge relay system is the Ser-212.

The protein belongs to the peptidase S1 family. Kallikrein subfamily. As to quaternary structure, interacts with SPINK9. In terms of tissue distribution, isoform 1 is predominantly expressed in the pancreas. Isoform 2 is expressed in adult brain and hippocampus. Isoform 1 and isoform 2 are found in fetal brain and placenta. Detected in salivary gland, uterus, thymus, breast, testis and kidney but not in spleen, liver, lung or normal ovarian tissue. Displays an 11.5-fold increase in Alzheimer disease hippocampus compared to controls and is overexpressed in some ovarian carcinomas. Expressed at low levels in normal skin while high levels are found in psoriasis vulgaris, seborrheic keratosis, lichen planus and squamous cell carcinoma skin samples. Expressed in the keratinocytes.

It is found in the secreted. The protein localises to the cytoplasm. The enzyme catalyses Cleavage of amide substrates following the basic amino acids Arg or Lys at the P1 position, with a preference for Arg over Lys.. Its activity is regulated as follows. Inhibited by a range of serine protease inhibitors including antipain, aprotinin, leupeptin, benzamidine and soybean trypsin inhibitor. In terms of biological role, serine protease which is capable of degrading a number of proteins such as casein, fibrinogen, kininogen, fibronectin and collagen type IV. Also cleaves L1CAM in response to increased neural activity. Induces neurite outgrowth and fasciculation of cultured hippocampal neurons. Plays a role in the formation and maturation of orphan and small synaptic boutons in the Schaffer-collateral pathway, regulates Schaffer-collateral long-term potentiation in the hippocampus and is required for memory acquisition and synaptic plasticity. Involved in skin desquamation and keratinocyte proliferation. Plays a role in the secondary phase of pathogenesis following spinal cord injury. The chain is Kallikrein-8 (KLK8) from Homo sapiens (Human).